A 131-amino-acid polypeptide reads, in one-letter code: Profilin-7 (131 aa).

Cysteines 13 and 115 form a disulfide. The Involved in PIP2 interaction signature appears at 81-97 (AVIRGKKGSGGITVKKT). Thr-111 is modified (phosphothreonine).

The protein belongs to the profilin family. Occurs in many kinds of cells as a complex with monomeric actin in a 1:1 ratio. Post-translationally, phosphorylated by MAP kinases.

The protein localises to the cytoplasm. Its subcellular location is the cytoskeleton. Functionally, binds to actin and affects the structure of the cytoskeleton. At high concentrations, profilin prevents the polymerization of actin, whereas it enhances it at low concentrations. This is Profilin-7 from Zea mays (Maize).